The chain runs to 194 residues: Imidazoleglycerol-phosphate dehydratase (194 aa).

This sequence belongs to the imidazoleglycerol-phosphate dehydratase family.

The protein resides in the cytoplasm. The catalysed reaction is D-erythro-1-(imidazol-4-yl)glycerol 3-phosphate = 3-(imidazol-4-yl)-2-oxopropyl phosphate + H2O. It participates in amino-acid biosynthesis; L-histidine biosynthesis; L-histidine from 5-phospho-alpha-D-ribose 1-diphosphate: step 6/9. This is Imidazoleglycerol-phosphate dehydratase from Streptococcus thermophilus (strain ATCC BAA-491 / LMD-9).